Here is a 790-residue protein sequence, read N- to C-terminus: Phenylalanine--tRNA ligase beta subunit (790 aa).

The tRNA-binding domain occupies 39-154; the sequence is PDSLNTVVTG…ADTPLGESAC (116 aa). Residues 404-483 form the B5 domain; the sequence is FSPLSLSVRP…FVQKTQKILP (80 aa). The Mg(2+) site is built by Asp-457, Asp-463, Glu-466, and Glu-467. The region spanning 694 to 790 is the FDX-ACB domain; it reads PIYPASSRDI…KLANIGQGNS (97 aa).

It belongs to the phenylalanyl-tRNA synthetase beta subunit family. Type 1 subfamily. Tetramer of two alpha and two beta subunits. Mg(2+) is required as a cofactor.

The protein localises to the cytoplasm. The enzyme catalyses tRNA(Phe) + L-phenylalanine + ATP = L-phenylalanyl-tRNA(Phe) + AMP + diphosphate + H(+). The chain is Phenylalanine--tRNA ligase beta subunit from Chlamydia trachomatis serovar A (strain ATCC VR-571B / DSM 19440 / HAR-13).